The following is a 197-amino-acid chain: Beta-crystallin A2 (197 aa).

Positions 1-11 are N-terminal arm; it reads MSSAPAPGSAP. Beta/gamma crystallin 'Greek key' domains follow at residues 12-52 and 53-99; these read VCLT…KVEN and GAWV…RPVL. Residues 100–105 are connecting peptide; sequence CANHSD. Beta/gamma crystallin 'Greek key' domains lie at 106–147 and 148–196; these read SRVT…KVSS and GAWV…RRVQ.

This sequence belongs to the beta/gamma-crystallin family. Homo/heterodimer, or complexes of higher-order. The structure of beta-crystallin oligomers seems to be stabilized through interactions between the N-terminal arms.

In terms of biological role, crystallins are the dominant structural components of the vertebrate eye lens. This is Beta-crystallin A2 (Cryba2) from Mus musculus (Mouse).